A 244-amino-acid polypeptide reads, in one-letter code: Probable H/ACA ribonucleoprotein complex subunit 1-like protein (244 aa).

Disordered stretches follow at residues 1–53 and 145–244; these read MSFR…GGYD and FLPQ…TKFE. RGG-box stretches follow at residues 4-51 and 153-222; these read RGGR…GRGG and RGRG…RGRG. A compositionally biased stretch (basic and acidic residues) spans 160–173; it reads RGGDRGGRGSDRGG. Gly residues-rich tracts occupy residues 174 to 201 and 208 to 217; these read RGGFGRGGGGGFRGGDRGGFGGGRGGFR and FRGGRGGDFG. The segment covering 218 to 228 has biased composition (basic and acidic residues); it reads GRGRGDFKRSY.

This sequence belongs to the GAR1 family. As to quaternary structure, component of the small nucleolar ribonucleoprotein particle containing H/ACA-type snoRNAs (H/ACA snoRNPs).

The protein resides in the nucleus. Its subcellular location is the nucleolus. In terms of biological role, required for ribosome biogenesis. Part of a complex which catalyzes pseudouridylation of rRNA. This involves the isomerization of uridine such that the ribose is subsequently attached to C5, instead of the normal N1. Pseudouridine ('psi') residues may serve to stabilize the conformation of rRNAs. Involved in phase separation into sub-nucleolar condensates. Essential for normal development and also plays a role in fertility. The polypeptide is Probable H/ACA ribonucleoprotein complex subunit 1-like protein (Caenorhabditis elegans).